Consider the following 124-residue polypeptide: Large ribosomal subunit protein bL12 (124 aa).

It belongs to the bacterial ribosomal protein bL12 family. In terms of assembly, homodimer. Part of the ribosomal stalk of the 50S ribosomal subunit. Forms a multimeric L10(L12)X complex, where L10 forms an elongated spine to which 2 to 4 L12 dimers bind in a sequential fashion. Binds GTP-bound translation factors.

Functionally, forms part of the ribosomal stalk which helps the ribosome interact with GTP-bound translation factors. Is thus essential for accurate translation. The polypeptide is Large ribosomal subunit protein bL12 (Campylobacter fetus subsp. fetus (strain 82-40)).